A 130-amino-acid polypeptide reads, in one-letter code: Fumarate reductase subunit C (130 aa).

3 helical membrane-spanning segments follow: residues 30–50, 60–80, and 110–130; these read EGTS…VFSL, FVSF…LFAA, and IKAL…VALL.

It belongs to the FrdC family. In terms of assembly, part of an enzyme complex containing four subunits: a flavoprotein (FrdA), an iron-sulfur protein (FrdB), and two hydrophobic anchor proteins (FrdC and FrdD).

It localises to the cell inner membrane. Two distinct, membrane-bound, FAD-containing enzymes are responsible for the catalysis of fumarate and succinate interconversion; fumarate reductase is used in anaerobic growth, and succinate dehydrogenase is used in aerobic growth. Anchors the catalytic components of the fumarate reductase complex to the cell inner membrane, binds quinones. This chain is Fumarate reductase subunit C, found in Yersinia pestis bv. Antiqua (strain Angola).